We begin with the raw amino-acid sequence, 28 residues long: Arylalkyl acylamidase (28 aa).

Homotetramer.

It carries out the reaction an N-acetylarylalkylamine + H2O = an aralkylamine + acetate. With respect to regulation, activated by divalent metal ions. Inhibited by certain thiol reagents. Shows a strict specificity for N-acetyl arylalkylamines but not acetanilide derivatives. The protein is Arylalkyl acylamidase of Pseudomonas putida (Arthrobacter siderocapsulatus).